We begin with the raw amino-acid sequence, 477 residues long: Fibrinogen beta chain (477 aa).

Residues 1-76 (EDLSLVGQPE…ASPRPQEAQK (76 aa)) form a disordered region. At Y13 the chain carries Sulfotyrosine. N-linked (GlcNAc...) asparagine glycosylation is present at N27. Over residues 44–55 (RVRRPPLRHRRL) the composition is skewed to basic residues. Intrachain disulfides connect C220–C304, C230–C259, and C412–C425. A Fibrinogen C-terminal domain is found at 221–476 (RVPVVSGMHC…QMAMKLRPKW (256 aa)).

In terms of assembly, heterohexamer; disulfide linked. Contains 2 sets of 3 non-identical chains (alpha, beta and gamma). The 2 heterotrimers are in head to head conformation with the N-termini in a small central domain. Conversion of fibrinogen to fibrin is triggered by thrombin, which cleaves fibrinopeptides A and B from alpha and beta chains, and thus exposes the N-terminal polymerization sites responsible for the formation of the soft clot. The soft clot is converted into the hard clot by factor XIIIA which catalyzes the epsilon-(gamma-glutamyl)lysine cross-linking between gamma chains (stronger) and between alpha chains (weaker) of different monomers.

It is found in the secreted. Fibrinogen has a double function: yielding monomers that polymerize into fibrin and acting as a cofactor in platelet aggregation. The protein is Fibrinogen beta chain of Petromyzon marinus (Sea lamprey).